Here is a 440-residue protein sequence, read N- to C-terminus: MKNYLSFGMFALLFALTFGTVNSVQAIAGPEWLLDRPSVNNSQLVVSVAGTVEGTNQDISLKFFEIDLTSRPAHGGKTEQGLSPKSKPFATDSGAMSHKLEKADLLKAIQEQLIANVHSNDDYFEVIDFASDATITDRNGKVYFADKDGSVTLPTQPVQEFLLSGHVRVRPYKEKPIQNQAKSVDVEYTVQFTPLNPDDDFRPGLKDTKLLKTLAIGDTITSQELLAQAQSILNKNHPGYTIYERDSSIVTHDNDIFRTILPMDQEFTYRVKNREQAYRINKKSGLNEEINNTDLISEKYYVLKKGEKPYDPFDRSHLKLFTIKYVDVDTNELLKSEQLLTASERNLDFRDLYDPRDKAKLLYNNLDAFGIMDYTLTGKVEDNHDDTNRIITVYMGKRPEGENASYHLAYDKDRYTEEEREVYSYLRYTGTPIPDNPNDK.

An N-terminal signal peptide occupies residues 1–26; sequence MKNYLSFGMFALLFALTFGTVNSVQA.

Its function is as follows. This protein is not a protease, but it activates plasminogen by complexing with it. As a potential virulence factor, it is thought to prevent the formation of effective fibrin barriers around the site of infection, thereby contributing to the invasiveness of the cells. The sequence is that of Streptokinase C (skc) from Streptococcus dysgalactiae subsp. equisimilis (Streptococcus equisimilis).